The chain runs to 427 residues: cAMP-dependent protein kinase regulatory subunit (427 aa).

The dimerization and phosphorylation stretch occupies residues 38 to 184 (QFCSNFFIRK…RIKVSISNNF (147 aa)). Positions 96–145 (TTHMGHPNDHGALHDDDDDPLEDEDDEEFDKFSTEPLPSLPPTNYNRGRR) are disordered. The span at 110–124 (DDDDDPLEDEDDEEF) shows a compositional bias: acidic residues. Ser147 is subject to Phosphoserine. 3',5'-cyclic AMP is bound by residues 185–300 (LFRN…FLSE), Glu250, Arg259, 303–422 (LLKS…YHAV), Glu372, and Arg381.

It belongs to the cAMP-dependent kinase regulatory chain family. Tetramer, composed of 2 regulatory (R) and 2 catalytic (C) subunits. In the presence of cAMP it dissociates into 2 active monomeric C subunits and an R dimer.

This Mucor circinelloides f. lusitanicus (Mucor racemosus var. lusitanicus) protein is cAMP-dependent protein kinase regulatory subunit (pkar).